The primary structure comprises 46 residues: Major cold shock protein (46 aa).

Residues 1–46 (EKGFGFLTQNNGGADVFVHFRAIASEGFKTLTEGQKVSFDVEQGQK) enclose the CSD domain.

Homodimer.

The protein localises to the cytoplasm. This is Major cold shock protein (cspA) from Photobacterium leiognathi subsp. mandapamensis (Photobacterium mandapamensis).